The primary structure comprises 448 residues: Pre-mRNA-splicing factor SAD1 (448 aa).

Residue Met1 is modified to N-acetylmethionine. Residues 27–124 (PNYAYLETVV…NSIKFAAYPT (98 aa)) form a UBP-type; degenerate zinc finger. Positions 60, 63, 79, and 85 each coordinate Zn(2+). The USP domain occupies 150 to 447 (IGFTNAATYD…ETFIQVWEKQ (298 aa)).

Component of the 45S U1.U2.U4/U6.U5 penta-snRNP particle, a subcomplex of the spliceosome.

The protein resides in the nucleus. In terms of biological role, promotes the assembly of newly synthesized U4 snRNA into the U4/U6 snRNP particle. Required for splicing of pre-mRNA. The sequence is that of Pre-mRNA-splicing factor SAD1 (SAD1) from Saccharomyces cerevisiae (strain ATCC 204508 / S288c) (Baker's yeast).